The sequence spans 541 residues: Atlastin-3 (541 aa).

Positions 1-22 (MLSPQRTAAVASRGAGDAMENG) are disordered. Positions 1–25 (MLSPQRTAAVASRGAGDAMENGKPG) are N-terminal hypervariable region (HVR). The Cytoplasmic segment spans residues 1–445 (MLSPQRTAAV…NVFSTFRTPA (445 aa)). Positions 57 to 306 (DLDVVVVSVA…LIPYVLNPSK (250 aa)) constitute a GB1/RHD3-type G domain. Positions 70, 71, 72, 73, 74, 75, and 109 each coordinate GDP. Aspartate 142 lines the Mg(2+) pocket. GDP contacts are provided by arginine 213, aspartate 214, valine 272, and serine 275. The segment at 344–434 (MLQATAANNL…YENFCKHNGS (91 aa)) is 3HB (three-helix bundle) domain. Lysine 391 bears the N6-acetyllysine mark. The helical transmembrane segment at 446–466 (VLFTGIAVLYIASGLTGFIGL) threads the bilayer. A topological domain (lumenal) is located at residue glutamate 467. The helical transmembrane segment at 468-488 (VVAQLFNCMVGLLLIALLTWG) threads the bilayer. At 489 to 541 (YIRYSGQYLELGGAIDSGAAYVLEQASSHIGNSTQAAVRDAIAGRPPADKKSQ) the chain is on the cytoplasmic side.

This sequence belongs to the TRAFAC class dynamin-like GTPase superfamily. GB1/RHD3 GTPase family. GB1 subfamily. In terms of assembly, monomeric and homodimeric. The homodimer, transiently formed by two molecules on opposing membranes, is the active form mediating ER membrane fusion. Interacts with ZFYVE27; both proteins are involved in endoplasmic reticulum tubular network organization. Interacts with REEP5; both proteins are involved in endoplasmic reticulum tubular network organization.

Its subcellular location is the endoplasmic reticulum membrane. It carries out the reaction GTP + H2O = GDP + phosphate + H(+). In terms of biological role, atlastin-3 (ATL3) is a membrane-anchored GTPase that mediates the GTP-dependent fusion of endoplasmic reticulum (ER) membranes, maintaining the continuous ER network. It facilitates the formation of three-way junctions where ER tubules intersect. Two atlastin-3 on neighboring ER tubules bind GTP and form loose homodimers through the GB1/RHD3-type G domains and 3HB regions. Upon GTP hydrolysis, the 3HB regions tighten, pulling the membranes together to drive their fusion. After fusion, the homodimer disassembles upon release of inorganic phosphate (Pi). Subsequently, GDP dissociates, resetting the monomers to a conformation ready for a new fusion cycle. The sequence is that of Atlastin-3 from Rattus norvegicus (Rat).